We begin with the raw amino-acid sequence, 550 residues long: Selinene synthase (550 aa).

Residues Asp-314, Asp-318, Asp-450, and Glu-458 each coordinate Mg(2+). The short motif at 314-318 (DDIYD) is the DDXXD motif element.

Belongs to the terpene synthase family. Mg(2+) is required as a cofactor. Mn(2+) serves as cofactor.

The catalysed reaction is (2E,6E)-farnesyl diphosphate = (+)-beta-selinene + diphosphate. It carries out the reaction (2E,6E)-farnesyl diphosphate = alpha-selinene + diphosphate. It functions in the pathway secondary metabolite biosynthesis; terpenoid biosynthesis. Functionally, sesquiterpene synthase that catalyzes the formation of alpha- and beta-selinene from trans,trans-farnesyl diphosphate (FPP). Also produces some nerolidol. The chain is Selinene synthase (SES) from Ocimum basilicum (Sweet basil).